A 675-amino-acid polypeptide reads, in one-letter code: Vacuolar protein sorting-associated protein 5 (675 aa).

3 disordered regions span residues 1–26 (MDYE…QSLV), 65–84 (EWKD…EHDN), and 165–219 (RAQR…RREN). The span at 168-180 (RNSKRNHSLKAKR) shows a compositional bias: basic residues. A compositionally biased stretch (basic and acidic residues) spans 195 to 204 (PLKKAEKENE). The PX domain maps to 279–394 (VAFKVEVKDP…LFLTSDDFSS (116 aa)). A 1,2-diacyl-sn-glycero-3-phospho-(1D-myo-inositol-3-phosphate) contacts are provided by R320, K346, and R360.

Belongs to the sorting nexin family. Component of the retromer complex which consists of VPS29, VPS26, VPS35, VPS5 and VPS17. Component of a retromer subcomplex consisting of VPSD5 and VPS17. In terms of processing, phosphorylated on serine residue(s).

The protein localises to the cytoplasm. It is found in the golgi apparatus membrane. It localises to the endosome membrane. In terms of biological role, plays a role in vesicular protein sorting. Required for retention of late Golgi membrane proteins and vacuolar biogenesis. Component of the membrane-associated retromer complex which is essential in endosome-to-Golgi retrograde transport. The VPS5-VPS17 subcomplex may assemble onto the membrane to promote vesicle formation. This chain is Vacuolar protein sorting-associated protein 5 (VPS5), found in Saccharomyces cerevisiae (strain ATCC 204508 / S288c) (Baker's yeast).